Consider the following 305-residue polypeptide: Glycine--tRNA ligase alpha subunit (305 aa).

This sequence belongs to the class-II aminoacyl-tRNA synthetase family. As to quaternary structure, tetramer of two alpha and two beta subunits.

It is found in the cytoplasm. It carries out the reaction tRNA(Gly) + glycine + ATP = glycyl-tRNA(Gly) + AMP + diphosphate. This is Glycine--tRNA ligase alpha subunit from Streptococcus pyogenes serotype M12 (strain MGAS2096).